A 728-amino-acid polypeptide reads, in one-letter code: Polyribonucleotide nucleotidyltransferase (728 aa).

Residues Asp509 and Asp515 each contribute to the Mg(2+) site. The KH domain occupies 576-638 (TKIYTFYIPK…TKLKIAILKI (63 aa)). One can recognise an S1 motif domain in the interval 648 to 715 (GTIYKAKVKN…KFRKIKLSHK (68 aa)).

It belongs to the polyribonucleotide nucleotidyltransferase family. The cofactor is Mg(2+).

Its subcellular location is the cytoplasm. It carries out the reaction RNA(n+1) + phosphate = RNA(n) + a ribonucleoside 5'-diphosphate. In terms of biological role, involved in mRNA degradation. Catalyzes the phosphorolysis of single-stranded polyribonucleotides processively in the 3'- to 5'-direction. The protein is Polyribonucleotide nucleotidyltransferase of Karelsulcia muelleri (strain GWSS) (Sulcia muelleri).